The sequence spans 414 residues: Snake venom metalloproteinase atrolysin-D (414 aa).

A signal peptide spans 1–20 (MIEVLLVTICLAVFPYQGSS). A propeptide spanning residues 21 to 190 (IILESGNVND…KASDLNLNPD (170 aa)) is cleaved from the precursor. Gln191 is modified (pyrrolidone carboxylic acid). A Peptidase M12B domain is found at 197 to 393 (RYIELVVVAD…YKPQCILNKP (197 aa)). The Ca(2+) site is built by Glu200 and Asp284. 2 cysteine pairs are disulfide-bonded: Cys308–Cys388 and Cys348–Cys355. His333 lines the Zn(2+) pocket. Residue Glu334 is part of the active site. The Zn(2+) site is built by His337 and His343. Positions 388 and 391 each coordinate Ca(2+). A propeptide spanning residues 394–414 (LRIDPVSTPVSGNELLEAGEE) is cleaved from the precursor.

It belongs to the venom metalloproteinase (M12B) family. P-I subfamily. Monomer. The cofactor is Zn(2+). In terms of processing, the N-terminus is blocked. As to expression, expressed by the venom gland.

The protein localises to the secreted. It catalyses the reaction Cleavage of 5-His-|-Leu-6, 10-His-|-Leu-11, 14-Ala-|-Leu-15, 16-Tyr-|-Leu-17 and 23-Gly-|-Phe-24 of insulin B chain. With small molecule substrates prefers hydrophobic residue at P2' and small residue such as Ala, Gly at P1.. Functionally, snake venom zinc metalloproteinase that causes hemorrhage by provoking the degradation of the sub-endothelial matrix proteins (fibronectin, laminin, type IV collagen, nidogen, and gelatins). This chain is Snake venom metalloproteinase atrolysin-D, found in Crotalus atrox (Western diamondback rattlesnake).